Consider the following 245-residue polypeptide: Lactate utilization protein A 1 (245 aa).

This sequence belongs to the LutA/YkgE family.

In terms of biological role, is involved in L-lactate degradation and allows cells to grow with lactate as the sole carbon source. The polypeptide is Lactate utilization protein A 1 (Bacillus mycoides (strain KBAB4) (Bacillus weihenstephanensis)).